Reading from the N-terminus, the 2967-residue chain is BEACH domain-containing protein lvsD (2967 aa).

Disordered regions lie at residues 1-25, 322-364, 588-615, 917-936, 1077-1105, 1173-1220, 1583-1613, 1831-1859, 1921-2009, and 2029-2062; these read MSSPLKFPFKQQQQQQQQQRSRIGG, NNNN…SSNS, ILSIDPNNNNNNNNNNNNNIQQPQQQQL, NNSNNNNNNNNSNSNNNNIN, GGSNNNNNNNNNNSNNNKDKIDSNNKDKD, NTSS…SDHR, NNNSGNNNSGNNINNNNNNNNNNTNLNNNEN, QQQQQQSQQSLQLPPSPSISNAGSSSSVV, PQKT…TLNN, and KSTLTSSSSSSPSSNNNNGNSNNNSNNNNNNNKN. One can recognise a BEACH 1 domain in the interval 229–491; sequence MTFRKAPSSV…QDLFRKGSNY (263 aa). Residues 1079–1092 are compositionally biased toward low complexity; that stretch reads SNNNNNNNNNNSNN. The span at 1093–1105 shows a compositional bias: basic and acidic residues; the sequence is NKDKIDSNNKDKD. Low complexity-rich tracts occupy residues 1185–1194, 1583–1611, 1831–1857, 1926–1980, 1993–2006, and 2034–2062; these read PLLTSTKSMS, NNNSGNNNSGNNINNNNNNNNNNTNLNNN, QQQQQQSQQSLQLPPSPSISNAGSSSS, QNQH…SFSN, NIITTTTTTTTTST, and SSSSSSPSSNNNNGNSNNNSNNNNNNNKN. Residues 2060 to 2162 form the BEACH-type PH domain; it reads NKNIKLEFST…ICAQILKLIG (103 aa). BEACH domains are found at residues 2202 to 2492 and 2628 to 2785; these read TPQQ…HPQR and NSRV…IYSN. 2 WD repeats span residues 2658 to 2710 and 2720 to 2761; these read NHKS…SDHH and GHNF…KSIQ. 2 disordered regions span residues 2798 to 2820 and 2915 to 2934; these read SATTTTTTRDDESSSSSLSSSNT and PSTSVSGDSNSNNNNNNNGN. Composition is skewed to low complexity over residues 2811–2820 and 2924–2934; these read SSSSLSSSNT and NSNNNNNNNGN.

The chain is BEACH domain-containing protein lvsD (lvsD) from Dictyostelium discoideum (Social amoeba).